Reading from the N-terminus, the 158-residue chain is 2-amino-4-hydroxy-6-hydroxymethyldihydropteridine pyrophosphokinase (158 aa).

The protein belongs to the HPPK family.

The enzyme catalyses 6-hydroxymethyl-7,8-dihydropterin + ATP = (7,8-dihydropterin-6-yl)methyl diphosphate + AMP + H(+). The protein operates within cofactor biosynthesis; tetrahydrofolate biosynthesis; 2-amino-4-hydroxy-6-hydroxymethyl-7,8-dihydropteridine diphosphate from 7,8-dihydroneopterin triphosphate: step 4/4. Catalyzes the transfer of pyrophosphate from adenosine triphosphate (ATP) to 6-hydroxymethyl-7,8-dihydropterin, an enzymatic step in folate biosynthesis pathway. The sequence is that of 2-amino-4-hydroxy-6-hydroxymethyldihydropteridine pyrophosphokinase (folK) from Methylorubrum extorquens (strain ATCC 14718 / DSM 1338 / JCM 2805 / NCIMB 9133 / AM1) (Methylobacterium extorquens).